A 62-amino-acid chain; its full sequence is Small ribosomal subunit protein eS27 (62 aa).

Zn(2+) is bound by residues C17, C20, C36, and C39. Residues 17 to 39 form a C4-type zinc finger; the sequence is CNDCENEQIIFGSASRKITCVVC.

It belongs to the eukaryotic ribosomal protein eS27 family. As to quaternary structure, part of the 30S ribosomal subunit. The cofactor is Zn(2+).

In Methanosarcina barkeri (strain Fusaro / DSM 804), this protein is Small ribosomal subunit protein eS27.